The chain runs to 76 residues: Small ribosomal subunit protein bS18 (76 aa).

Belongs to the bacterial ribosomal protein bS18 family. As to quaternary structure, part of the 30S ribosomal subunit. Forms a tight heterodimer with protein bS6.

Binds as a heterodimer with protein bS6 to the central domain of the 16S rRNA, where it helps stabilize the platform of the 30S subunit. The sequence is that of Small ribosomal subunit protein bS18 from Oceanobacillus iheyensis (strain DSM 14371 / CIP 107618 / JCM 11309 / KCTC 3954 / HTE831).